The primary structure comprises 794 residues: Protein SEY1 (794 aa).

At 1-687 (MMEVIDSVLG…KRSIIKTTTA (687 aa)) the chain is on the cytoplasmic side. A GB1/RHD3-type G domain is found at 43-272 (GLDYHVISVF…ANPYYFKPQY (230 aa)). A GTP-binding site is contributed by 53–60 (GSQSSGKS). Residues 331–352 (VDHILDDREKLGEVLKNLKQEC) are a coiled coil. Residues 688-708 (IPIWMYLLVVALGWNEFVMVL) traverse the membrane as a helical segment. At 709-711 (RNP) the chain is on the lumenal side. Residues 712-732 (LLVTLVLLFGVGFIFVNKFGL) traverse the membrane as a helical segment. Residues 733–794 (WGPVLNVAHN…SDNEKIEKSE (62 aa)) lie on the Cytoplasmic side of the membrane. Positions 770 to 794 (NSAGKESYEMKDMSDSDNEKIEKSE) are disordered. Residues 775–794 (ESYEMKDMSDSDNEKIEKSE) show a composition bias toward basic and acidic residues.

It belongs to the TRAFAC class dynamin-like GTPase superfamily. GB1/RHD3 GTPase family. RHD3 subfamily.

It localises to the endoplasmic reticulum membrane. Its function is as follows. Cooperates with the reticulon proteins and tubule-shaping DP1 family proteins to generate and maintain the structure of the tubular endoplasmic reticulum network. Has GTPase activity, which is required for its function in ER organization. The polypeptide is Protein SEY1 (Zygosaccharomyces rouxii (strain ATCC 2623 / CBS 732 / NBRC 1130 / NCYC 568 / NRRL Y-229)).